Consider the following 357-residue polypeptide: Eugenol O-methyltransferase (357 aa).

Positions 203, 226, 246, 247, and 260 each coordinate S-adenosyl-L-methionine. Catalysis depends on His264, which acts as the Proton acceptor.

Belongs to the class I-like SAM-binding methyltransferase superfamily. Cation-independent O-methyltransferase family. COMT subfamily. In terms of tissue distribution, specifically expressed in the peltate glandular trichomes on the surface of the young basil leaves.

It catalyses the reaction (E)-isoeugenol + S-adenosyl-L-methionine = (E)-isomethyleugenol + S-adenosyl-L-homocysteine + H(+). It participates in aromatic compound metabolism; phenylpropanoid biosynthesis. Functionally, phenylpropene O-methyltransferase that catalyzes the methylation of the para-4-hydroxyl of eugenol to methyleugenol. Can also convert chavicol to methylchavicol but with less affinity. The sequence is that of Eugenol O-methyltransferase (EOMT1) from Ocimum basilicum (Sweet basil).